Reading from the N-terminus, the 862-residue chain is DNA topoisomerase 3-beta-1 (862 aa).

The region spanning 3–153 (TVLMVAEKPS…EKTVFRARFS (151 aa)) is the Toprim domain. In terms of domain architecture, Topo IA-type catalytic spans 171–593 (DHNEALSVDA…HTLDVFKRKF (423 aa)). Tyrosine 336 (O-(5'-phospho-DNA)-tyrosine intermediate) is an active-site residue. Basic residues predominate over residues 821–851 (PMHRGGPGRRQGRGRGRARRPPGKPNPRRPK). The segment at 821-854 (PMHRGGPGRRQGRGRGRARRPPGKPNPRRPKDKM) is disordered.

Belongs to the type IA topoisomerase family. In terms of tissue distribution, isoform 1 is found in testis, heart and skeletal muscle. A 4 kb transcript which probably represents isoform 2 is found in thymus, kidney and pancreas.

The enzyme catalyses ATP-independent breakage of single-stranded DNA, followed by passage and rejoining.. Releases the supercoiling and torsional tension of DNA introduced during the DNA replication and transcription by transiently cleaving and rejoining one strand of the DNA duplex. Introduces a single-strand break via transesterification at a target site in duplex DNA. The scissile phosphodiester is attacked by the catalytic tyrosine of the enzyme, resulting in the formation of a DNA-(5'-phosphotyrosyl)-enzyme intermediate and the expulsion of a 3'-OH DNA strand. The free DNA strand than undergoes passage around the unbroken strand thus removing DNA supercoils. Finally, in the religation step, the DNA 3'-OH attacks the covalent intermediate to expel the active-site tyrosine and restore the DNA phosphodiester backbone. Possesses negatively supercoiled DNA relaxing activity. This is DNA topoisomerase 3-beta-1 (TOP3B) from Homo sapiens (Human).